A 123-amino-acid polypeptide reads, in one-letter code: Double-stranded DNA deaminase immunity protein (123 aa).

In terms of assembly, the toxic domain forms a 1:1 complex with the DddI immunity protein. This protein blocks the active site of the toxin.

Functionally, immunity protein component of a toxin-immunity protein module, which functions as a cellular contact-dependent growth inhibition (CDI) system. CDI modules allow bacteria to communicate with and inhibit the growth of closely related neighboring bacteria in a contact-dependent fashion. Bacteria that have this module inhibit or kill bacteria without it, giving them a growth advantage. Specifically inhibits the toxic activity of cognate toxin DddA (C-terminal 163 residue fragment) upon expression in E.coli. The chain is Double-stranded DNA deaminase immunity protein from Burkholderia cenocepacia (strain H111).